We begin with the raw amino-acid sequence, 175 residues long: MAETTRLLVDADACPVKDEIYRVGARYGLKTVIVANSWMNIPQSPLIERVVVPEGPDVADDWIAEQATPADIVITNDVPLAVRCLAKQTSVLRPNGEEIDERSVGMVSAMRDLMQGLRETGAVTTYNPSFGKADRSRFLSALDTLIVRLRRKAALARTVPSSSQTIHRPVPGDVP.

This sequence belongs to the UPF0178 family.

The protein is UPF0178 protein GOX1710 of Gluconobacter oxydans (strain 621H) (Gluconobacter suboxydans).